Reading from the N-terminus, the 1223-residue chain is RNA-binding protein 20 (1223 aa).

3 disordered regions span residues 1–59 (MVLA…QAGL), 238–288 (QAYG…PTSQ), and 306–381 (GEVG…GARR). The segment covering 29 to 57 (APAPPAPPGPRGMQPPPPPPPPPPPPPQA) has biased composition (pro residues). 2 stretches are compositionally biased toward polar residues: residues 238–261 (QAYG…SGSV) and 314–331 (GPNS…QSKP). The U1-type zinc-finger motif lies at 410-444 (HLPHICSICDKKVFDLKDWELHVKGKLHAQKCLLF). One can recognise an RRM domain in the interval 520–595 (RVVHICNLPE…EKLLIRMSKR (76 aa)). Residues 626–636 (EADRYGPERPR) show a composition bias toward basic and acidic residues. 3 disordered regions span residues 626 to 902 (EADR…TNME), 971 to 995 (EISL…DVEM), and 1042 to 1102 (MSSP…STQE). Positions 630-657 (YGPERPRSRSPVSRSLSPRSHTPSFTSC) are RS. Phosphoserine is present on residues S637, S639, S642, S644, S662, and S681. Over residues 638–662 (RSPVSRSLSPRSHTPSFTSCSSSHS) the composition is skewed to low complexity. Basic and acidic residues-rich tracts occupy residues 676 to 711 (DSWE…MWAH) and 718 to 737 (RQVD…GYRE). Over residues 742-752 (SGSPSSLHSVS) the composition is skewed to low complexity. S744 is subject to Phosphoserine. Basic and acidic residues-rich tracts occupy residues 755-774 (KSRE…DKYL) and 786-852 (RKDE…KEEQ). 8 positions are modified to phosphoserine: S803, S861, S872, S887, S889, S973, S976, and S1044. Positions 864–884 (RQEKETESSDAENTRTRKEQD) are enriched in basic and acidic residues. The span at 1083–1102 (STPTETDLQSQACQGVSTQE) shows a compositional bias: polar residues. S1111 and S1116 each carry phosphoserine. Residues 1157-1188 (FYCKLCGLFYTSEEMAKMSHCRSAVHYRNLQK) form a Matrin-type zinc finger. The disordered stretch occupies residues 1197–1223 (GLKETEGAGSPRPEDSGIVPHFERKKL). Phosphoserine is present on S1206.

As to quaternary structure, associates with components of the U1 and U2 U1 small nuclear ribonucleoprotein complexes. In terms of processing, phosphorylation regulates the subcellular localization. Phosphorylation of Ser-637 and Ser-639 in the RS (arginine/serine-rich) region promotes nuclear localization of the protein. In contrast, phosphorylation of the C-terminal disordered region promotes localization to cytoplasmic ribonucleoprotein granules.

Its subcellular location is the nucleus. It localises to the cytoplasm. The protein resides in the cytoplasmic ribonucleoprotein granule. Functionally, RNA-binding protein that acts as a regulator of mRNA splicing of a subset of genes encoding key structural proteins involved in cardiac development, such as TTN (Titin), CACNA1C, CAMK2D or PDLIM5/ENH. Acts as a repressor of mRNA splicing: specifically binds the 5'UCUU-3' motif that is predominantly found within intronic sequences of pre-mRNAs, leading to the exclusion of specific exons in target transcripts. RBM20-mediated exon skipping is hormone-dependent and is essential for TTN isoform transition in both cardiac and skeletal muscles. RBM20-mediated exon skipping of TTN provides substrates for the formation of circular RNA (circRNAs) from the TTN transcripts. Together with RBM24, promotes the expression of short isoforms of PDLIM5/ENH in cardiomyocytes. The protein is RNA-binding protein 20 of Sus scrofa (Pig).